The primary structure comprises 315 residues: MDKEQLTTVVEKMLNSIGFKTARVSFRGGCFDLVATRQILLLFIKTLVNIDKFTEEQAEDLKRLAKLFRASALLVGLRTKNIELEDGVVYERFGIYAVNPETLFSILAGTEYPLVMAERGGFFVRIDGERLRELREKYGYSTTELAEMLGVSRKSVQRYEKGEGMVSIDVAIRLEEIFDEPLVKPIDIFKAKIEKVTLSSPPENELEKEVFDRLERLGMSVVKIKRAPFNAVTKEEDEEVNLLTGIDEKKTPSTIRRVRLVNQIAEFVESEGVFVLNEKKTEVVGKVPIIPKDILNKVRDVDELMEIIKELRSST.

In terms of domain architecture, HTH cro/C1-type spans 131–189; the sequence is LRELREKYGYSTTELAEMLGVSRKSVQRYEKGEGMVSIDVAIRLEEIFDEPLVKPIDIF. A DNA-binding region (H-T-H motif) is located at residues 142–161; that stretch reads TTELAEMLGVSRKSVQRYEK.

The chain is Putative HTH-type transcriptional regulatory protein PF1851 from Pyrococcus furiosus (strain ATCC 43587 / DSM 3638 / JCM 8422 / Vc1).